Here is a 312-residue protein sequence, read N- to C-terminus: MPSGQPVFPRRVPDAYIAMRGLVVASLLILLVGGTDAFRICAFNAHRLTLTKVIKESVMDTLVQILARCDIMVLQEVVDSSQNTVLFLLQKLQSSKSYSFLNSSLLGRSTYKEKYVYIYRSDKTQVLNFYQYNDTEDIFAREPFVAQFTLPSKILPSVVLVPLHTTPKDVEKELNALYDVFLDVSQRWQNENVILLGDFNADCASLAKKRLNSLLLRTKAGFHWVIPDGEDTTVRASTNCTYDRIVMHGQGCQKLLKAAATFDFPRRFQLTEEEALRVSDHYPVEVELNKAAQGIPPHCLSTLLLLSLSQLG.

An N-terminal signal peptide occupies residues 1–35 (MPSGQPVFPRRVPDAYIAMRGLVVASLLILLVGGT). Asn102 carries an N-linked (GlcNAc...) asparagine glycan. Residue Glu113 is part of the active site. A glycan (N-linked (GlcNAc...) asparagine) is linked at Asn133. The active site involves His164. A disulfide bridge links Cys203 with Cys240. Asn239 carries N-linked (GlcNAc...) asparagine glycosylation.

Belongs to the DNase I family.

The protein resides in the endoplasmic reticulum. This chain is Deoxyribonuclease-1-like 1 (Dnase1l1), found in Rattus norvegicus (Rat).